Here is a 181-residue protein sequence, read N- to C-terminus: Adenine phosphoribosyltransferase (181 aa).

This sequence belongs to the purine/pyrimidine phosphoribosyltransferase family. Homodimer.

It is found in the cytoplasm. The enzyme catalyses AMP + diphosphate = 5-phospho-alpha-D-ribose 1-diphosphate + adenine. It participates in purine metabolism; AMP biosynthesis via salvage pathway; AMP from adenine: step 1/1. Its function is as follows. Catalyzes a salvage reaction resulting in the formation of AMP, that is energically less costly than de novo synthesis. The chain is Adenine phosphoribosyltransferase from Acidobacterium capsulatum (strain ATCC 51196 / DSM 11244 / BCRC 80197 / JCM 7670 / NBRC 15755 / NCIMB 13165 / 161).